The following is a 214-amino-acid chain: tRNA (guanine-N(7)-)-methyltransferase (214 aa).

Residues glutamate 44, aspartate 69, aspartate 96, and aspartate 118 each contribute to the S-adenosyl-L-methionine site. Aspartate 118 is an active-site residue. Position 122 (lysine 122) interacts with substrate. Residues 124–129 (KHEKRR) are interaction with RNA. Substrate contacts are provided by residues aspartate 154 and 191 to 194 (TEYE).

It belongs to the class I-like SAM-binding methyltransferase superfamily. TrmB family.

The catalysed reaction is guanosine(46) in tRNA + S-adenosyl-L-methionine = N(7)-methylguanosine(46) in tRNA + S-adenosyl-L-homocysteine. Its pathway is tRNA modification; N(7)-methylguanine-tRNA biosynthesis. Its function is as follows. Catalyzes the formation of N(7)-methylguanine at position 46 (m7G46) in tRNA. The polypeptide is tRNA (guanine-N(7)-)-methyltransferase (Enterococcus faecalis (strain ATCC 700802 / V583)).